The sequence spans 182 residues: Protein GrpE (182 aa).

Basic and acidic residues predominate over residues 1 to 17; the sequence is MEEKKRCEESEKIKEQE. The interval 1–33 is disordered; sequence MEEKKRCEESEKIKEQENETLPNEDSPSMGKKV.

Belongs to the GrpE family. As to quaternary structure, homodimer.

It localises to the cytoplasm. Functionally, participates actively in the response to hyperosmotic and heat shock by preventing the aggregation of stress-denatured proteins, in association with DnaK and GrpE. It is the nucleotide exchange factor for DnaK and may function as a thermosensor. Unfolded proteins bind initially to DnaJ; upon interaction with the DnaJ-bound protein, DnaK hydrolyzes its bound ATP, resulting in the formation of a stable complex. GrpE releases ADP from DnaK; ATP binding to DnaK triggers the release of the substrate protein, thus completing the reaction cycle. Several rounds of ATP-dependent interactions between DnaJ, DnaK and GrpE are required for fully efficient folding. The polypeptide is Protein GrpE (Borrelia hermsii (strain HS1 / DAH)).